A 189-amino-acid chain; its full sequence is Sec-independent protein translocase protein TatB (189 aa).

A helical transmembrane segment spans residues methionine 1–glycine 21. The disordered stretch occupies residues threonine 152–serine 189. Over residues glutamine 153–serine 189 the composition is skewed to polar residues.

Belongs to the TatB family. As to quaternary structure, the Tat system comprises two distinct complexes: a TatABC complex, containing multiple copies of TatA, TatB and TatC subunits, and a separate TatA complex, containing only TatA subunits. Substrates initially bind to the TatABC complex, which probably triggers association of the separate TatA complex to form the active translocon.

Its subcellular location is the cell inner membrane. Part of the twin-arginine translocation (Tat) system that transports large folded proteins containing a characteristic twin-arginine motif in their signal peptide across membranes. Together with TatC, TatB is part of a receptor directly interacting with Tat signal peptides. TatB may form an oligomeric binding site that transiently accommodates folded Tat precursor proteins before their translocation. The sequence is that of Sec-independent protein translocase protein TatB from Helicobacter hepaticus (strain ATCC 51449 / 3B1).